The following is a 93-amino-acid chain: MPLASPIQHHEVTRGVAPSMALRDGVCRIPLSAEFTAQCTDSQAPQMKRAPRCCCLAVVAQCPHHCPVLGCWSGCRCCCYCVFELHWLYCIQE.

This is an uncharacterized protein from Homo sapiens (Human).